A 313-amino-acid chain; its full sequence is MPKVKSGAIGRRRGRQEQRRELKSAGGLMFNTGIGQHILKNPLIINSIIDKAALRPTDVVLEVGPGTGNMTVKLLEKAKKVVACELDPRLVAELRKRVQGTPVASKLQVLVGDVLKTDLPFFDTCVANLPYQISSPFVFKLLLHRPFFRCAILMFQRELALRLVAKPGDKLYCRLSINTQLLARVDHLMKVGKNNFRPPPKVESSVVRIEPKNPPPPINFQEWDGLVRITFVRKNKTLSAAFKSSAVQQLLEKNYRIHCSVHNIIIPEDFSIADKIQQILTSTGFSDKRARSMDIDDFIRLLHGFNAEGIHFS.

The interval 1–21 (MPKVKSGAIGRRRGRQEQRRE) is disordered. 6 residues coordinate S-adenosyl-L-methionine: His-37, Leu-39, Gly-64, Glu-85, Asp-113, and Asn-128.

The protein belongs to the class I-like SAM-binding methyltransferase superfamily. rRNA adenine N(6)-methyltransferase family. In terms of assembly, part of the small subunit (SSU) processome, composed of more than 70 proteins and the RNA chaperone small nucleolar RNA (snoRNA) U3.

The protein resides in the nucleus. It localises to the nucleoplasm. It is found in the nucleolus. The enzyme catalyses adenosine(1779)/adenosine(1780) in 18S rRNA + 4 S-adenosyl-L-methionine = N(6)-dimethyladenosine(1779)/N(6)-dimethyladenosine(1780) in 18S rRNA + 4 S-adenosyl-L-homocysteine + 4 H(+). Its function is as follows. Specifically dimethylates two adjacent adenosines in the loop of a conserved hairpin near the 3'-end of 18S rRNA in the 40S particle. Involved in the pre-rRNA processing steps leading to small-subunit rRNA production independently of its RNA-modifying catalytic activity. Part of the small subunit (SSU) processome, first precursor of the small eukaryotic ribosomal subunit. During the assembly of the SSU processome in the nucleolus, many ribosome biogenesis factors, an RNA chaperone and ribosomal proteins associate with the nascent pre-rRNA and work in concert to generate RNA folding, modifications, rearrangements and cleavage as well as targeted degradation of pre-ribosomal RNA by the RNA exosome. In Macaca fascicularis (Crab-eating macaque), this protein is Dimethyladenosine transferase (DIMT1).